Reading from the N-terminus, the 82-residue chain is Large ribosomal subunit protein bL31B (82 aa).

Belongs to the bacterial ribosomal protein bL31 family. Type B subfamily. As to quaternary structure, part of the 50S ribosomal subunit.

This Dichelobacter nodosus (strain VCS1703A) protein is Large ribosomal subunit protein bL31B.